The sequence spans 510 residues: Lysine--tRNA ligase (510 aa).

Mg(2+)-binding residues include glutamate 420 and glutamate 427.

Belongs to the class-II aminoacyl-tRNA synthetase family. Homodimer. Mg(2+) serves as cofactor.

Its subcellular location is the cytoplasm. It catalyses the reaction tRNA(Lys) + L-lysine + ATP = L-lysyl-tRNA(Lys) + AMP + diphosphate. The polypeptide is Lysine--tRNA ligase (Vibrio vulnificus (strain YJ016)).